Here is a 102-residue protein sequence, read N- to C-terminus: Large ribosomal subunit protein uL24 (102 aa).

It belongs to the universal ribosomal protein uL24 family. Part of the 50S ribosomal subunit.

Its function is as follows. One of two assembly initiator proteins, it binds directly to the 5'-end of the 23S rRNA, where it nucleates assembly of the 50S subunit. One of the proteins that surrounds the polypeptide exit tunnel on the outside of the subunit. The chain is Large ribosomal subunit protein uL24 from Leuconostoc mesenteroides subsp. mesenteroides (strain ATCC 8293 / DSM 20343 / BCRC 11652 / CCM 1803 / JCM 6124 / NCDO 523 / NBRC 100496 / NCIMB 8023 / NCTC 12954 / NRRL B-1118 / 37Y).